Reading from the N-terminus, the 460-residue chain is tRNA modification GTPase MnmE (460 aa).

Positions 26, 88, and 127 each coordinate (6S)-5-formyl-5,6,7,8-tetrahydrofolate. The 160-residue stretch at 222–381 folds into the TrmE-type G domain; the sequence is GLKVAIVGRP…LESAILSKVQ (160 aa). Asn-232 serves as a coordination point for K(+). GTP contacts are provided by residues 232–237, 251–257, and 276–279; these read NVGKSS, TELPGTT, and DTAG. Ser-236 contributes to the Mg(2+) binding site. The K(+) site is built by Thr-251, Leu-253, and Thr-256. Residue Thr-257 coordinates Mg(2+). A (6S)-5-formyl-5,6,7,8-tetrahydrofolate-binding site is contributed by Lys-460.

The protein belongs to the TRAFAC class TrmE-Era-EngA-EngB-Septin-like GTPase superfamily. TrmE GTPase family. Homodimer. Heterotetramer of two MnmE and two MnmG subunits. Requires K(+) as cofactor.

It localises to the cytoplasm. Exhibits a very high intrinsic GTPase hydrolysis rate. Involved in the addition of a carboxymethylaminomethyl (cmnm) group at the wobble position (U34) of certain tRNAs, forming tRNA-cmnm(5)s(2)U34. This Cyanothece sp. (strain PCC 7425 / ATCC 29141) protein is tRNA modification GTPase MnmE.